The sequence spans 764 residues: G-type lectin S-receptor-like serine/threonine-protein kinase SD3-1 (764 aa).

Positions 1-24 are cleaved as a signal peptide; that stretch reads MKMLRALLLCLSLVFFLAFQIVVS. 2 Bulb-type lectin domains span residues 25-151 and 154-279; these read EIQL…QSFG and TDTL…WKPV. Residues 25–442 lie on the Extracellular side of the membrane; sequence EIQLGSKLVV…TKSHSICIPC (418 aa). N-linked (GlcNAc...) asparagine glycans are attached at residues N92, N198, and N248. The 38-residue stretch at 283–320 folds into the EGF-like; atypical domain; that stretch reads VENQCRVFATCGSQVCSFNSSGYTECNCPFNAFVSVSD. Cystine bridges form between C287-C298, C293-C308, C332-C413, C365-C388, and C369-C375. 2 N-linked (GlcNAc...) asparagine glycosylation sites follow: N301 and N353. Positions 332–413 constitute an Apple domain; that stretch reads CKSGFNMVKF…LSSISYVKTC (82 aa). N423 is a glycosylation site (N-linked (GlcNAc...) asparagine). Residues 443-463 traverse the membrane as a helical segment; the sequence is LVGATSTTLVLFLGFQLGIVV. The Cytoplasmic portion of the chain corresponds to 464-764; it reads YIYRRKKKLA…SESSQSLYEP (301 aa). Residues 466-764 form the Protein kinase domain; it reads YRRKKKLAKK…SESSQSLYEP (299 aa). Residues 508-516 and K526 contribute to the ATP site; that span reads IGPQIFKGV. Residues 586-603 form a caM-binding region; it reads LRSKKLTWRIRTDTCLSV. The disordered stretch occupies residues 738–764; the sequence is DPPPPPFACARSSPTNSSESSQSLYEP. Positions 749 to 764 are enriched in low complexity; sequence SSPTNSSESSQSLYEP.

It localises to the cell membrane. The enzyme catalyses L-seryl-[protein] + ATP = O-phospho-L-seryl-[protein] + ADP + H(+). It catalyses the reaction L-threonyl-[protein] + ATP = O-phospho-L-threonyl-[protein] + ADP + H(+). This Arabidopsis thaliana (Mouse-ear cress) protein is G-type lectin S-receptor-like serine/threonine-protein kinase SD3-1 (SD31).